Consider the following 248-residue polypeptide: DNA polymerase sliding clamp (248 aa).

The protein belongs to the PCNA family. As to quaternary structure, homotrimer. The subunits circularize to form a toroid; DNA passes through its center. Replication factor C (RFC) is required to load the toroid on the DNA.

Sliding clamp subunit that acts as a moving platform for DNA processing. Responsible for tethering the catalytic subunit of DNA polymerase and other proteins to DNA during high-speed replication. In Cenarchaeum symbiosum (strain A), this protein is DNA polymerase sliding clamp.